The chain runs to 61 residues: Fasciculin-2 (61 aa).

Disulfide bonds link Cys3-Cys22, Cys17-Cys39, Cys41-Cys52, and Cys53-Cys59.

The protein belongs to the three-finger toxin family. Short-chain subfamily. Acn-esterase inhibitor sub-subfamily. Expressed by the venom gland.

The protein resides in the secreted. In terms of biological role, interferes with neuromuscular transmission by inhibiting the enzyme acetylcholinesterase (AChE) present at the neuromuscular junction. It selectively binds and inhibits with a 1:1 stoichiometry the mammalian and electric fish AChE at picomolar concentrations. It is highly specific for the peripheral site of AChE and blocks the entry of acetylcholine into the active site of the enzyme (through the Met-33 residue), thereby preventing its breakdown. It has been called fasciculin since after injection into mice it causes severe, generalized and long-lasting (5-7 hours) fasciculations. This chain is Fasciculin-2, found in Dendroaspis angusticeps (Eastern green mamba).